A 97-amino-acid chain; its full sequence is MSKITADDVRKVAKLARLDLPEDTIATYTGQLERILDYVDQLQAVDTEGVPPTTRAVEVVNATREDSVVATDVRQELLDQAPQREGDFFRVPKILAD.

The protein belongs to the GatC family. In terms of assembly, heterotrimer of A, B and C subunits.

It catalyses the reaction L-glutamyl-tRNA(Gln) + L-glutamine + ATP + H2O = L-glutaminyl-tRNA(Gln) + L-glutamate + ADP + phosphate + H(+). The enzyme catalyses L-aspartyl-tRNA(Asn) + L-glutamine + ATP + H2O = L-asparaginyl-tRNA(Asn) + L-glutamate + ADP + phosphate + 2 H(+). Its function is as follows. Allows the formation of correctly charged Asn-tRNA(Asn) or Gln-tRNA(Gln) through the transamidation of misacylated Asp-tRNA(Asn) or Glu-tRNA(Gln) in organisms which lack either or both of asparaginyl-tRNA or glutaminyl-tRNA synthetases. The reaction takes place in the presence of glutamine and ATP through an activated phospho-Asp-tRNA(Asn) or phospho-Glu-tRNA(Gln). This Synechococcus sp. (strain CC9311) protein is Aspartyl/glutamyl-tRNA(Asn/Gln) amidotransferase subunit C.